The primary structure comprises 108 residues: ATP synthase peripheral stalk subunit F6, mitochondrial (108 aa).

A mitochondrion-targeting transit peptide spans 1–32 (MILQRLFRFSSIIRSAVSVHFRRNIGVTAVAF). Residues lysine 41, lysine 46, and lysine 79 each carry the N6-acetyllysine modification. N6-acetyllysine; alternate is present on residues lysine 84, lysine 94, and lysine 99. N6-succinyllysine; alternate is present on residues lysine 84, lysine 94, and lysine 99. The residue at position 105 (lysine 105) is an N6-acetyllysine.

Belongs to the eukaryotic ATPase subunit F6 family. In terms of assembly, component of the ATP synthase complex composed at least of ATP5F1A/subunit alpha, ATP5F1B/subunit beta, ATP5MC1/subunit c (homooctomer), MT-ATP6/subunit a, MT-ATP8/subunit 8, ATP5ME/subunit e, ATP5MF/subunit f, ATP5MG/subunit g, ATP5MK/subunit k, ATP5MJ/subunit j, ATP5F1C/subunit gamma, ATP5F1D/subunit delta, ATP5F1E/subunit epsilon, ATP5PF/subunit F6, ATP5PB/subunit b, ATP5PD/subunit d, ATP5PO/subunit OSCP. ATP synthase complex consists of a soluble F(1) head domain (subunits alpha(3) and beta(3)) - the catalytic core - and a membrane F(0) domain - the membrane proton channel (subunits c, a, 8, e, f, g, k and j). These two domains are linked by a central stalk (subunits gamma, delta, and epsilon) rotating inside the F1 region and a stationary peripheral stalk (subunits F6, b, d, and OSCP).

Its subcellular location is the mitochondrion. The protein resides in the mitochondrion inner membrane. Subunit F6, of the mitochondrial membrane ATP synthase complex (F(1)F(0) ATP synthase or Complex V) that produces ATP from ADP in the presence of a proton gradient across the membrane which is generated by electron transport complexes of the respiratory chain. ATP synthase complex consist of a soluble F(1) head domain - the catalytic core - and a membrane F(1) domain - the membrane proton channel. These two domains are linked by a central stalk rotating inside the F(1) region and a stationary peripheral stalk. During catalysis, ATP synthesis in the catalytic domain of F(1) is coupled via a rotary mechanism of the central stalk subunits to proton translocation. In vivo, can only synthesize ATP although its ATP hydrolase activity can be activated artificially in vitro. Part of the complex F(0) domain. Part of the complex F(0) domain and the peripheric stalk, which acts as a stator to hold the catalytic alpha(3)beta(3) subcomplex and subunit a/ATP6 static relative to the rotary elements. This chain is ATP synthase peripheral stalk subunit F6, mitochondrial, found in Macaca fascicularis (Crab-eating macaque).